We begin with the raw amino-acid sequence, 518 residues long: Protein nucleotidyltransferase YdiU (518 aa).

Residues G99, G101, R102, K122, D134, G135, R192, and R199 each coordinate ATP. D270 serves as the catalytic Proton acceptor. Residues N271 and D280 each contribute to the Mg(2+) site. D280 lines the ATP pocket.

Belongs to the SELO family. It depends on Mg(2+) as a cofactor. Mn(2+) serves as cofactor.

The catalysed reaction is L-seryl-[protein] + ATP = 3-O-(5'-adenylyl)-L-seryl-[protein] + diphosphate. It catalyses the reaction L-threonyl-[protein] + ATP = 3-O-(5'-adenylyl)-L-threonyl-[protein] + diphosphate. It carries out the reaction L-tyrosyl-[protein] + ATP = O-(5'-adenylyl)-L-tyrosyl-[protein] + diphosphate. The enzyme catalyses L-histidyl-[protein] + UTP = N(tele)-(5'-uridylyl)-L-histidyl-[protein] + diphosphate. The catalysed reaction is L-seryl-[protein] + UTP = O-(5'-uridylyl)-L-seryl-[protein] + diphosphate. It catalyses the reaction L-tyrosyl-[protein] + UTP = O-(5'-uridylyl)-L-tyrosyl-[protein] + diphosphate. Its function is as follows. Nucleotidyltransferase involved in the post-translational modification of proteins. It can catalyze the addition of adenosine monophosphate (AMP) or uridine monophosphate (UMP) to a protein, resulting in modifications known as AMPylation and UMPylation. In Methylobacillus flagellatus (strain ATCC 51484 / DSM 6875 / VKM B-1610 / KT), this protein is Protein nucleotidyltransferase YdiU.